The chain runs to 553 residues: Methyl-coenzyme M reductase II subunit alpha (553 aa).

A coenzyme F430-binding site is contributed by Gln150. Coenzyme B is bound by residues Arg228, 259-260, and Arg273; that span reads KH. His260 is modified (pros-methylhistidine). Residue Arg274 is modified to 5-methylarginine. Position 335 (Tyr335) interacts with coenzyme M. 2-methylglutamine is present on Gln402. Position 446 (Tyr446) interacts with coenzyme M. Position 447 is a 1-thioglycine (Gly447). Asp452 bears the (Z)-2,3-didehydroaspartate mark. An S-methylcysteine modification is found at Cys454.

It belongs to the methyl-coenzyme M reductase alpha subunit family. MCR is a hexamer of two alpha, two beta, and two gamma chains, forming a dimer of heterotrimers. Coenzyme F430 serves as cofactor. Post-translationally, the alpha subunit contains six modified amino acids near the active site region. Is methylated on His-260, Arg-274, Gln-402 and Cys-454, probably by the action of specific S-adenosylmethionine-dependent methyltransferases. Also contains a thioglycine at position 447, forming a thiopeptide bond. Contains a didehydroaspartate residue at position 452. The methylation on C5 of Arg-274 is a post-translational methylation not essential in vivo, but which plays a role for the stability and structural integrity of MCR.

The enzyme catalyses coenzyme B + methyl-coenzyme M = methane + coenzyme M-coenzyme B heterodisulfide. Its pathway is one-carbon metabolism; methyl-coenzyme M reduction; methane from methyl-coenzyme M: step 1/1. Functionally, component of the methyl-coenzyme M reductase (MCR) I that catalyzes the reductive cleavage of methyl-coenzyme M (CoM-S-CH3 or 2-(methylthio)ethanesulfonate) using coenzyme B (CoB or 7-mercaptoheptanoylthreonine phosphate) as reductant which results in the production of methane and the mixed heterodisulfide of CoB and CoM (CoM-S-S-CoB). This is the final step in methanogenesis. The sequence is that of Methyl-coenzyme M reductase II subunit alpha (mrtA) from Methanothermobacter marburgensis (strain ATCC BAA-927 / DSM 2133 / JCM 14651 / NBRC 100331 / OCM 82 / Marburg) (Methanobacterium thermoautotrophicum).